A 364-amino-acid polypeptide reads, in one-letter code: Methylthioribose-1-phosphate isomerase (364 aa).

Aspartate 254 acts as the Proton donor in catalysis.

It belongs to the eIF-2B alpha/beta/delta subunits family. MtnA subfamily.

The protein resides in the cytoplasm. Its subcellular location is the nucleus. The enzyme catalyses 5-(methylsulfanyl)-alpha-D-ribose 1-phosphate = 5-(methylsulfanyl)-D-ribulose 1-phosphate. It functions in the pathway amino-acid biosynthesis; L-methionine biosynthesis via salvage pathway; L-methionine from S-methyl-5-thio-alpha-D-ribose 1-phosphate: step 1/6. Functionally, catalyzes the interconversion of methylthioribose-1-phosphate (MTR-1-P) into methylthioribulose-1-phosphate (MTRu-1-P). The sequence is that of Methylthioribose-1-phosphate isomerase from Drosophila simulans (Fruit fly).